Reading from the N-terminus, the 81-residue chain is Small ribosomal subunit protein bS16 (81 aa).

Belongs to the bacterial ribosomal protein bS16 family.

This is Small ribosomal subunit protein bS16 from Lachnospira eligens (strain ATCC 27750 / DSM 3376 / VPI C15-48 / C15-B4) (Eubacterium eligens).